A 334-amino-acid chain; its full sequence is Probable fructose-bisphosphate aldolase class 1 (334 aa).

It belongs to the class I fructose-bisphosphate aldolase family.

The catalysed reaction is beta-D-fructose 1,6-bisphosphate = D-glyceraldehyde 3-phosphate + dihydroxyacetone phosphate. It participates in carbohydrate degradation; glycolysis; D-glyceraldehyde 3-phosphate and glycerone phosphate from D-glucose: step 4/4. In Xylella fastidiosa (strain Temecula1 / ATCC 700964), this protein is Probable fructose-bisphosphate aldolase class 1.